A 186-amino-acid chain; its full sequence is MKRLWLTGYRSYELGVFGDSGEKLKVIKYSLKKQLNNYLDDGLEWLITGGQMGIEQWGIQVAQELKIDYPELKVAMMLPFSDFGQQWNEQNQGTLMTLKAQVDFCEPVIKAPYSGPQQLRQYQQFMLTHTDGALLYYDREAPGKPEYDAKAIETYQEQHEYPNNQVDFFELQDLANELAELENQAF.

Belongs to the UPF0398 family.

The polypeptide is UPF0398 protein LCA_0919 (Latilactobacillus sakei subsp. sakei (strain 23K) (Lactobacillus sakei subsp. sakei)).